The following is a 141-amino-acid chain: Large ribosomal subunit protein uL16c (141 aa).

Residues 1 to 17 show a composition bias toward basic residues; it reads MLSPRRTKYRKQHRGRL. The tract at residues 1–20 is disordered; the sequence is MLSPRRTKYRKQHRGRLKGT.

It belongs to the universal ribosomal protein uL16 family. In terms of assembly, part of the 50S ribosomal subunit.

The protein resides in the plastid. It localises to the chloroplast. The protein is Large ribosomal subunit protein uL16c of Staurastrum punctulatum (Green alga).